A 994-amino-acid chain; its full sequence is Transposase for transposon Tn2501 (994 aa).

It belongs to the transposase 7 family.

Its function is as follows. Required for transposition of transposon Tn2501. The polypeptide is Transposase for transposon Tn2501 (tnpA) (Escherichia coli).